The sequence spans 510 residues: D-alanine--D-alanyl carrier protein ligase (510 aa).

157–158 (TS) lines the ATP pocket. Aspartate 202 contacts D-alanine. ATP is bound at residue 297–302 (NTYGPT). Valine 306 contributes to the D-alanine binding site. ATP contacts are provided by aspartate 389 and lysine 498. Lysine 498 lines the D-alanine pocket.

The protein belongs to the ATP-dependent AMP-binding enzyme family. DltA subfamily.

The protein resides in the cytoplasm. The catalysed reaction is holo-[D-alanyl-carrier protein] + D-alanine + ATP = D-alanyl-[D-alanyl-carrier protein] + AMP + diphosphate. The protein operates within cell wall biogenesis; lipoteichoic acid biosynthesis. Functionally, catalyzes the first step in the D-alanylation of lipoteichoic acid (LTA), the activation of D-alanine and its transfer onto the D-alanyl carrier protein (Dcp) DltC. In an ATP-dependent two-step reaction, forms a high energy D-alanyl-AMP intermediate, followed by transfer of the D-alanyl residue as a thiol ester to the phosphopantheinyl prosthetic group of the Dcp. D-alanylation of LTA plays an important role in modulating the properties of the cell wall in Gram-positive bacteria, influencing the net charge of the cell wall. The protein is D-alanine--D-alanyl carrier protein ligase of Listeria monocytogenes serotype 4b (strain F2365).